The sequence spans 701 residues: Arachidonate 12-lipoxygenase, 12R-type (701 aa).

The region spanning 2–119 is the PLAT domain; sequence ATYKVKVATG…TLALREATGK (118 aa). One can recognise a Lipoxygenase domain in the interval 120-701; it reads ITADDTLPIL…PVLIENSISI (582 aa). Residues histidine 398, histidine 403, histidine 578, asparagine 582, and isoleucine 701 each contribute to the Fe cation site.

The protein belongs to the lipoxygenase family. It depends on Fe cation as a cofactor. As to expression, expressed in skin epidermis and other stratified epithelia including tongue and forestomach. Low levels of expression are found in trachea, brain and lung. Not expressed in intestine, liver, kidney, adipose tissue, muscle or hematopoietic cells.

The protein resides in the cytoplasm. It is found in the perinuclear region. It carries out the reaction 1-O-methyl-(5Z,8Z,11Z,14Z)-eicosatetraenoate + O2 = 1-O-methyl (5Z,8Z,10E,12R,14Z)-hydroperoxyiecosatetraenoate. The catalysed reaction is 1-O-methyl-(5Z,8Z,11Z,14Z)-eicosatetraenoate + O2 = 1-O-methyl-8-hydroperoxy-(5Z,9E,11Z,14Z)-eicosatetraenoate. It catalyses the reaction (5Z,8Z,11Z,14Z)-eicosatetraenoate + O2 = (12R)-hydroperoxy-(5Z,8Z,10E,14Z)-eicosatetraenoate. The enzyme catalyses N-[omega-(9Z,12Z)-octadecadienoyloxy]acyl-beta-D-glucosyl-(1&lt;-&gt;1)-octadecasphing-4E-enine + O2 = N-[omega-(9R)-hydroperoxy-(10E,12Z)-octadecadienoyloxy]acyl-beta-D-glucosyl-(1&lt;-&gt;1)-octadecasphing-4E-enine. It carries out the reaction a N-[omega-(9Z,12Z)-octadecadienoyloxy]-acylsphin-4E-enine + O2 = a N-[omega-(9R)-hydroperoxy-(10E,12Z)-octadecadienoyloxy]-acylsphin-4E-enine. The catalysed reaction is (6Z,9Z,12Z)-octadecatrienoate + O2 = 10-hydroperoxy-(6Z,8E,12Z)-octadecatrienoate. It catalyses the reaction (4Z,7Z,10Z,13Z,16Z,19Z)-docosahexaenoate + O2 = 14-hydroperoxy-(4Z,7Z,10Z,12E,16Z,19Z)-docosahexaenoate. The enzyme catalyses (8Z,11Z,14Z)-eicosatrienoate + O2 = (8Z,10E,14Z)-12-hydroperoxyeicosatrienoate. It carries out the reaction (5Z,8Z,11Z,14Z,17Z)-eicosapentaenoate + O2 = (5Z,7Z,8Z,10E,14Z,17Z)-12-hydroperoxyeicosapentaenoate. The catalysed reaction is (6Z,9Z,12Z)-octadecatrienoate + O2 = 10R-hydroperoxy-(6Z,8E,12Z)-octadecatrienoate. It catalyses the reaction 1-O-methyl-(5Z,8Z,11Z,14Z)-eicosatetraenoate + O2 = 1-O-methyl-(8R)-hydroperoxy-(5Z,9E,11Z,14Z)-eicosatrienoate. The enzyme catalyses 1-O-methyl-(9Z,12Z)-octadecadienoate + O2 = 1-O-methyl-(9R)-hydroperoxy-(10E,12Z)-octadecadienoate. It carries out the reaction 1-O-methyl-20-hydroxy-(5Z,8Z,11Z,14Z)-eicosatetraenoate + O2 = 1-O-methyl-8-hydroperoxy-20-hydroxy-(5Z,9E,11Z,14Z)-eicosatetraenoate. The catalysed reaction is 1-O-methyl-20-hydroxy-(5Z,8Z,11Z,14Z)-eicosatetraenoate + O2 = 1-O-methyl-12-hydroperoxy-20-hydroxy-(5Z,8Z,10E,14Z)-eicosatetraenoate. It catalyses the reaction 1-O-methyl-20-hydroxy-(5Z,8Z,11Z,14Z)-eicosatetraenoate + O2 = 1-O-methyl-9-hydroperoxy-20-hydroxy-(5Z,7E,11Z,14Z)-eicosatetraenoate. The enzyme catalyses 1-O-methyl-(9Z,12Z)-octadecadienoate + O2 = 1-O-methyl-(13S)-hydroperoxy-(9Z,11E)-octadecadienoate. Its pathway is lipid metabolism; hydroperoxy eicosatetraenoic acid biosynthesis. The protein operates within lipid metabolism; sphingolipid metabolism. With respect to regulation, increased by calcium. Catalyzes the regio and stereo-specific incorporation of a single molecule of dioxygen into free and esterified polyunsaturated fatty acids generating lipid hydroperoxides that can be further reduced to the corresponding hydroxy species. Does not convert arachidonic acid to (12R)-hydroperoxyeicosatetraenoic acid/(12R)-HPETE. In the skin, acts upstream of ALOXE3 on the lineolate moiety of esterified omega-hydroxyacyl-sphingosine (EOS) ceramides to produce an epoxy-ketone derivative, a crucial step in the conjugation of omega-hydroxyceramide to membrane proteins. Therefore plays a crucial role in the synthesis of corneocytes lipid envelope and the establishment of the skin barrier to water loss. May also play a role in the regulation of the expression of airway mucins. In Mus musculus (Mouse), this protein is Arachidonate 12-lipoxygenase, 12R-type.